The sequence spans 397 residues: G2/mitotic-specific cyclin-B2 (397 aa).

Disordered stretches follow at residues 1-20 and 64-97; these read MALL…DTGV and KVTH…PEDV. Thr-8 bears the Phosphothreonine mark. Ser-11 bears the Phosphoserine mark. Positions 64–74 are enriched in polar residues; sequence KVTHVNKQPKP. Residues Ser-77, Ser-98, and Ser-391 each carry the phosphoserine modification.

It belongs to the cyclin family. Cyclin AB subfamily. In terms of assembly, interacts with the CDK1 protein kinase to form a serine/threonine kinase holoenzyme complex also known as maturation promoting factor (MPF). The cyclin subunit imparts substrate specificity to the complex.

In terms of biological role, essential for the control of the cell cycle at the G2/M (mitosis) transition. The chain is G2/mitotic-specific cyclin-B2 (CCNB2) from Mesocricetus auratus (Golden hamster).